A 421-amino-acid polypeptide reads, in one-letter code: C2 calcium-dependent domain-containing protein 4C (421 aa).

Disordered regions lie at residues 13 to 97 (RGSG…AKLA), 119 to 140 (DWLSEEATDADPQAQGAMSLPS), 158 to 228 (HTRR…SPFG), and 250 to 303 (VSQL…TVHV). Over residues 215-228 (ESDTGSSAESSPFG) the composition is skewed to polar residues. Phosphoserine is present on residues serine 262, serine 264, and serine 273. Residues 305–421 (PRGSVRLLAE…LPLTSLLPFL (117 aa)) form the C2 domain.

This sequence belongs to the C2CD4 family.

This Homo sapiens (Human) protein is C2 calcium-dependent domain-containing protein 4C (C2CD4C).